We begin with the raw amino-acid sequence, 111 residues long: Disintegrin Eo1 subunit 1 (111 aa).

A signal peptide spans 1-20 (MIQVLLVIICLAVFPYQGSS). A propeptide spanning residues 21-46 (IILESGNVNDFELVYPKKVTVLPTGA) is cleaved from the precursor. Residues 26–111 (GNVNDFELVY…SDCPRNPWKD (86 aa)) enclose the Disintegrin domain. 4 disulfide bridges follow: Cys53–Cys76, Cys67–Cys73, Cys72–Cys97, and Cys85–Cys104. The Cell attachment site; atypical (WGD) motif lies at 89 to 91 (WGD). A propeptide spanning residues 110–111 (KD) is cleaved from the precursor.

This sequence belongs to the disintegrin family. Dimeric disintegrin subfamily. As to quaternary structure, heterodimer; disulfide-linked. As to expression, expressed by the venom gland.

It is found in the secreted. In terms of biological role, poor inhibitor of platelet aggregation. The disintegrin inhibits the adhesion of cells expressing the RGD-dependent integrin alpha-5/beta-1 (ITGA5/ITGB1) to immobilized fibronectin. Inhibition on alpha-IIb/beta-3 (ITGA2B/ITGB3) is low. This Echis ocellatus (Ocellated saw-scaled viper) protein is Disintegrin Eo1 subunit 1.